The following is a 413-amino-acid chain: Multifunctional CCA protein (413 aa).

ATP-binding residues include glycine 8 and arginine 11. Residues glycine 8 and arginine 11 each coordinate CTP. Mg(2+) is bound by residues aspartate 21 and aspartate 23. Residues arginine 91, arginine 137, and arginine 140 each coordinate ATP. Positions 91, 137, and 140 each coordinate CTP. The 102-residue stretch at 228 to 329 (TGIHTLMVLA…IKIFDKADLW (102 aa)) folds into the HD domain.

This sequence belongs to the tRNA nucleotidyltransferase/poly(A) polymerase family. Bacterial CCA-adding enzyme type 1 subfamily. In terms of assembly, monomer. Can also form homodimers and oligomers. Requires Mg(2+) as cofactor. The cofactor is Ni(2+).

The enzyme catalyses a tRNA precursor + 2 CTP + ATP = a tRNA with a 3' CCA end + 3 diphosphate. It catalyses the reaction a tRNA with a 3' CCA end + 2 CTP + ATP = a tRNA with a 3' CCACCA end + 3 diphosphate. Catalyzes the addition and repair of the essential 3'-terminal CCA sequence in tRNAs without using a nucleic acid template. Adds these three nucleotides in the order of C, C, and A to the tRNA nucleotide-73, using CTP and ATP as substrates and producing inorganic pyrophosphate. tRNA 3'-terminal CCA addition is required both for tRNA processing and repair. Also involved in tRNA surveillance by mediating tandem CCA addition to generate a CCACCA at the 3' terminus of unstable tRNAs. While stable tRNAs receive only 3'-terminal CCA, unstable tRNAs are marked with CCACCA and rapidly degraded. The polypeptide is Multifunctional CCA protein (Shewanella woodyi (strain ATCC 51908 / MS32)).